The primary structure comprises 51 residues: Large ribosomal subunit protein bL33 (51 aa).

The protein belongs to the bacterial ribosomal protein bL33 family.

This is Large ribosomal subunit protein bL33 from Acidithiobacillus ferrooxidans (strain ATCC 53993 / BNL-5-31) (Leptospirillum ferrooxidans (ATCC 53993)).